Reading from the N-terminus, the 89-residue chain is DNA-directed RNA polymerase subunit Rpo6 (89 aa).

The protein belongs to the archaeal Rpo6/eukaryotic RPB6 RNA polymerase subunit family. In terms of assembly, part of the RNA polymerase complex.

It is found in the cytoplasm. The enzyme catalyses RNA(n) + a ribonucleoside 5'-triphosphate = RNA(n+1) + diphosphate. Functionally, DNA-dependent RNA polymerase (RNAP) catalyzes the transcription of DNA into RNA using the four ribonucleoside triphosphates as substrates. The sequence is that of DNA-directed RNA polymerase subunit Rpo6 from Aeropyrum pernix (strain ATCC 700893 / DSM 11879 / JCM 9820 / NBRC 100138 / K1).